Consider the following 266-residue polypeptide: Phosphate import ATP-binding protein PstB 1 (266 aa).

The ABC transporter domain maps to 18–261; the sequence is AQTSNLSFYY…PTNQLTEQYV (244 aa). Residue 50-57 coordinates ATP; it reads GPSGCGKT.

This sequence belongs to the ABC transporter superfamily. Phosphate importer (TC 3.A.1.7) family. The complex is composed of two ATP-binding proteins (PstB), two transmembrane proteins (PstC and PstA) and a solute-binding protein (PstS).

The protein resides in the cell inner membrane. It catalyses the reaction phosphate(out) + ATP + H2O = ADP + 2 phosphate(in) + H(+). In terms of biological role, part of the ABC transporter complex PstSACB involved in phosphate import. Responsible for energy coupling to the transport system. The chain is Phosphate import ATP-binding protein PstB 1 from Gloeobacter violaceus (strain ATCC 29082 / PCC 7421).